We begin with the raw amino-acid sequence, 241 residues long: Transcription initiation factor TFIID subunit 14 (241 aa).

The region spanning 1 to 137 (MTTVKRTVRL…PGLLKALTAT (137 aa)) is the YEATS domain. The interval 141-169 (PGYSDEGEEARKDKRKNESEVGAGKKKAK) is disordered. A compositionally biased stretch (basic and acidic residues) spans 149 to 159 (EARKDKRKNES).

It belongs to the TAF14 family. As to quaternary structure, component of the fcp1/TFIIF/polII complex via interaction of tfg3 with both tfg1/TFIIF-alpha and tfg2/TFIIF-beta subunits. Component of the SWI/SNF global transcription activator complex composed of at least arp9, arp42, snf5, snf22, snf30, sbf59, sol1, ssr1, ssr2, ssr3, ssr4 and tfg3. Also interacts with the TATA-binding protein (TBP). Component of the mst2 complex composed of at least eaf6, mst2, nto1, pdp3, ptf1, ptf2 and tfg3.

It localises to the nucleus. Its subcellular location is the nucleoplasm. In terms of biological role, functions as a component of the DNA-binding general transcription factor complex TFIID, and the RNA polymerase II associated general transcription factor complex TFIIF. Binding of TFIID to a promoter (with or without TATA element) is the initial step in preinitiation complex (PIC) formation. TFIID plays a key role in the regulation of gene expression by RNA polymerase II through different activities such as transcription activator interaction, core promoter recognition and selectivity, TFIIA and TFIIB interaction, facilitation of DNA opening and initiation of transcription. TFIIF is essential for the initiation of transcription by RNA polymerase II. TFIIF functions include the recruitment of RNA polymerase II to the promoter bound DNA-TBP-TFIIB complex, decreasing the affinity of RNA polymerase II for non-specific DNA, allowing for the subsequent recruitment of TFIIE and TFIIH, and facilitating RNA polymerase II elongation. The TAF14 subunit has stimulatory activity. Component of the SWI/SNF complex, an ATP-dependent chromatin remodeling complex, required for the positive and negative regulation of gene expression of a large number of genes. It changes chromatin structure by altering DNA-histone contacts within a nucleosome, leading eventually to a change in nucleosome position, thus facilitating or repressing binding of gene-specific transcription factors. Component of the mst2 complex which is a highly specific H3 lysine 14 (H3K14) acetyltransferase that functions together with gcn5 to regulate global levels of H3K14 acetylation (H3K14ac), critical for DNA damage checkpoint activation. This chain is Transcription initiation factor TFIID subunit 14 (tfg3), found in Schizosaccharomyces pombe (strain 972 / ATCC 24843) (Fission yeast).